The following is a 273-amino-acid chain: Putative pyruvate, phosphate dikinase regulatory protein (273 aa).

149–156 provides a ligand contact to ADP; sequence GPSRTSKT.

Belongs to the pyruvate, phosphate/water dikinase regulatory protein family. PDRP subfamily.

It carries out the reaction N(tele)-phospho-L-histidyl/L-threonyl-[pyruvate, phosphate dikinase] + ADP = N(tele)-phospho-L-histidyl/O-phospho-L-threonyl-[pyruvate, phosphate dikinase] + AMP + H(+). The catalysed reaction is N(tele)-phospho-L-histidyl/O-phospho-L-threonyl-[pyruvate, phosphate dikinase] + phosphate + H(+) = N(tele)-phospho-L-histidyl/L-threonyl-[pyruvate, phosphate dikinase] + diphosphate. In terms of biological role, bifunctional serine/threonine kinase and phosphorylase involved in the regulation of the pyruvate, phosphate dikinase (PPDK) by catalyzing its phosphorylation/dephosphorylation. This Rickettsia felis (strain ATCC VR-1525 / URRWXCal2) (Rickettsia azadi) protein is Putative pyruvate, phosphate dikinase regulatory protein.